A 106-amino-acid chain; its full sequence is Putative membrane protein insertion efficiency factor (106 aa).

The protein belongs to the UPF0161 family.

It is found in the cell inner membrane. Functionally, could be involved in insertion of integral membrane proteins into the membrane. This is Putative membrane protein insertion efficiency factor from Acinetobacter baylyi (strain ATCC 33305 / BD413 / ADP1).